The following is a 554-amino-acid chain: uncharacterized protein (554 aa).

A signal peptide spans 1–33 (MKKILIIILFIIIFIVLIYSGLWFVIMFSLSHS).

This is an uncharacterized protein from Rickettsia prowazekii (strain Madrid E).